The following is a 262-amino-acid chain: MMNNSITLLLALLVGLVGFAFTNKKRALVREDFLPPMSFKVDRVAAPNQKFADCNMFWSVPKSPLLAATTSAATPTAQQQQQDGGVSALDPLLTADGDASQPIVYDRFIYANKKSRLRQHGDPIRGDLPIIPHNSDWFRPSVTPHLDLKEGALQAIGGFDNGTNNQLSALMNASAGNALQTFGGAAFSGPGGLASNLGLAGPQQPLVSQPPMTGSLPARYMSALPYGSNLMTGQTATGMIPQYTAQKLVHVDRAGDVQVLRS.

Positions 1 to 22 are cleaved as a signal peptide; the sequence is MMNNSITLLLALLVGLVGFAFT.

It belongs to the IIV-6 117L family.

This is an uncharacterized protein from Aedes vexans (Inland floodwater mosquito).